The chain runs to 1534 residues: DNA polymerase alpha catalytic subunit (1534 aa).

Residues 1–12 are compositionally biased toward low complexity; that stretch reads MDEGSADAGASG. 3 disordered regions span residues 1–23, 96–141, and 864–905; these read MDEG…SEAV, THRT…LSAA, and FNST…GPSY. Basic residues predominate over residues 116–125; it reads RKRKQPRPQS. Residues 127–141 are compositionally biased toward low complexity; it reads RPPQQSAAAASLSAA. 2 stretches are compositionally biased toward basic and acidic residues: residues 864-882 and 889-898; these read FNST…RPDE and DEGHHVDQGK. Positions 1340, 1343, 1383, 1386, 1422, 1427, 1448, and 1454 each coordinate Zn(2+). The segment at 1340 to 1386 adopts a CysA-type zinc-finger fold; it reads CPSCSTTFDCPPVSSLIIGSSSGNVSNPNEGNDASINFWRRMRCPRC. A CysB motif motif is present at residues 1422–1451; that stretch reads CDDEGCKYSTHSVNLRVMGDSERGTICPNY.

It belongs to the DNA polymerase type-B family.

It localises to the nucleus. The catalysed reaction is DNA(n) + a 2'-deoxyribonucleoside 5'-triphosphate = DNA(n+1) + diphosphate. Functionally, polymerase alpha in a complex with DNA primase is a replicative polymerase. This Oryza sativa subsp. japonica (Rice) protein is DNA polymerase alpha catalytic subunit.